Reading from the N-terminus, the 210-residue chain is Dof zinc finger protein DOF4.4 (210 aa).

The Dof-type zinc-finger motif lies at Arg24 to Arg78. Zn(2+) is bound by residues Cys26, Cys29, Cys51, and Cys54.

The protein resides in the nucleus. Its function is as follows. Transcription factor that binds specifically to a 5'-AA[AG]G-3' consensus core sequence. This is Dof zinc finger protein DOF4.4 (DOF4.4) from Arabidopsis thaliana (Mouse-ear cress).